The sequence spans 114 residues: Seed trypsin/chymotrypsin inhibitor TI5-72 (114 aa).

The first 28 residues, 1–28 (MELMNKKVMMKLALMVFLLSFAANVVNA), serve as a signal peptide directing secretion. Positions 29 to 42 (RFDSTSFITQVLSN) are excised as a propeptide. 7 disulfide bridges follow: Cys-50-Cys-103, Cys-51-Cys-66, Cys-54-Cys-99, Cys-56-Cys-64, Cys-73-Cys-80, Cys-77-Cys-92, and Cys-82-Cys-90.

It belongs to the Bowman-Birk serine protease inhibitor family. In terms of tissue distribution, seed.

In terms of biological role, inhibitor of trypsin and of chymotrypsin. May function as a natural phytochemical defense against predators. The sequence is that of Seed trypsin/chymotrypsin inhibitor TI5-72 (TI572) from Pisum sativum (Garden pea).